Here is a 193-residue protein sequence, read N- to C-terminus: Cysteine and glycine-rich protein 1 (193 aa).

The region spanning 10–61 is the LIM zinc-binding 1 domain; that stretch reads CGVCQKTVYFAEEVQCEGSSFHKSCFLCLVCKKNLDSTTVAVHGEEIYCKSC. The Nuclear localization signal signature appears at 64-69; it reads KKYGPK. Position 81 is a phosphoserine (serine 81). N6-acetyllysine occurs at positions 84, 112, 131, 137, and 161. Positions 119-170 constitute an LIM zinc-binding 2 domain; the sequence is CPRCSQAVYAAEKVIGAGKSWHKSCFRCAKCGKGLESTTLADKDGEIYCKGC. Serine 192 carries the phosphoserine modification.

In terms of assembly, interacts with ASCC1; ASCC2 and TRIP4.

The protein resides in the nucleus. In terms of biological role, could play a role in neuronal development. In Bos taurus (Bovine), this protein is Cysteine and glycine-rich protein 1 (CSRP1).